Reading from the N-terminus, the 98-residue chain is Feather beta keratin (98 aa).

S2 bears the N-acetylserine mark.

This sequence belongs to the avian keratin family. The avian keratins (F-ker, S-ker, C-ker and B-ker) are a complex mixture of very similar polypeptides.

This Cathartes aura (Turkey vulture) protein is Feather beta keratin.